The chain runs to 1416 residues: DNA-directed RNA polymerase subunit beta' (1416 aa).

C71, C73, C86, and C89 together coordinate Zn(2+). Residues D461, D463, and D465 each contribute to the Mg(2+) site. The Zn(2+) site is built by C815, C892, C899, and C902.

The protein belongs to the RNA polymerase beta' chain family. The RNAP catalytic core consists of 2 alpha, 1 beta, 1 beta' and 1 omega subunit. When a sigma factor is associated with the core the holoenzyme is formed, which can initiate transcription. Requires Mg(2+) as cofactor. The cofactor is Zn(2+).

It catalyses the reaction RNA(n) + a ribonucleoside 5'-triphosphate = RNA(n+1) + diphosphate. Functionally, DNA-dependent RNA polymerase catalyzes the transcription of DNA into RNA using the four ribonucleoside triphosphates as substrates. In Blochmanniella pennsylvanica (strain BPEN), this protein is DNA-directed RNA polymerase subunit beta'.